A 1690-amino-acid chain; its full sequence is DNA-directed RNA polymerase subunit beta' (1690 aa).

Residues Cys-63, Cys-65, Cys-78, and Cys-81 each coordinate Zn(2+). Mg(2+) is bound by residues Asp-753, Asp-755, and Asp-757. Positions 1107, 1295, 1302, and 1305 each coordinate Zn(2+).

This sequence belongs to the RNA polymerase beta' chain family. In terms of assembly, the RNAP catalytic core consists of 2 alpha, 1 beta, 1 beta' and 1 omega subunit. When a sigma factor is associated with the core the holoenzyme is formed, which can initiate transcription. Mg(2+) serves as cofactor. Requires Zn(2+) as cofactor.

It catalyses the reaction RNA(n) + a ribonucleoside 5'-triphosphate = RNA(n+1) + diphosphate. DNA-dependent RNA polymerase catalyzes the transcription of DNA into RNA using the four ribonucleoside triphosphates as substrates. This Thermotoga maritima (strain ATCC 43589 / DSM 3109 / JCM 10099 / NBRC 100826 / MSB8) protein is DNA-directed RNA polymerase subunit beta'.